Reading from the N-terminus, the 150-residue chain is MKKIDIKILDSRIGDCFKLPKYATPGSAGIDLRACIDNTISLEPGETNLISTGLAVHIADTGLAGIIIPRSGLGHHGIVLGNLVGLIDSDYQGSIMVSLWNRGKEIFTIQPNERIAQIVFVQIVQVYFNIVDNFQKSKRGERGFGHSGRV.

Substrate is bound by residues 70–72, asparagine 82, 86–88, and methionine 96; these read RSG and LID.

Belongs to the dUTPase family. Mg(2+) serves as cofactor.

The catalysed reaction is dUTP + H2O = dUMP + diphosphate + H(+). It functions in the pathway pyrimidine metabolism; dUMP biosynthesis; dUMP from dCTP (dUTP route): step 2/2. Its function is as follows. This enzyme is involved in nucleotide metabolism: it produces dUMP, the immediate precursor of thymidine nucleotides and it decreases the intracellular concentration of dUTP so that uracil cannot be incorporated into DNA. This Baumannia cicadellinicola subsp. Homalodisca coagulata protein is Deoxyuridine 5'-triphosphate nucleotidohydrolase.